We begin with the raw amino-acid sequence, 184 residues long: Putative axial regulator YABBY 2 (184 aa).

The segment at 15-42 (CSFCTTILAVSVPYASLFTLVTVRCGHC) adopts a C4-type zinc-finger fold. Composition is skewed to polar residues over residues 76–94 (LVTRKDCASSSRSTNNLSE) and 171–184 (LDQSVAGQKSNGYY). Disordered regions lie at residues 76 to 115 (LVTRKDCASSSRSTNNLSENIDREAPRMPPIRPPEKRQRV) and 162 to 184 (LDGNKKGKQLDQSVAGQKSNGYY).

This sequence belongs to the YABBY family. As to quaternary structure, interacts with SPL/NZZ and SPEAR2. As to expression, expressed at low levels in abaxial regions of lateral aerial organ primordia leading to cotyledons, leaves, flower meristems, sepals, petals, stamen and carpels, but not in roots.

It is found in the nucleus. In terms of biological role, involved in the abaxial cell fate determination during embryogenesis and organogenesis. The sequence is that of Putative axial regulator YABBY 2 (YAB2) from Arabidopsis thaliana (Mouse-ear cress).